The sequence spans 132 residues: Fatty acid-binding protein, intestinal (132 aa).

Position 2 is an N-acetylalanine (A2). Hexadecanoate contacts are provided by W83 and R107. Positions 83 and 107 each coordinate tetradecanoate.

Belongs to the calycin superfamily. Fatty-acid binding protein (FABP) family.

The protein localises to the cytoplasm. Its function is as follows. FABPs are thought to play a role in the intracellular transport of long-chain fatty acids and their acyl-CoA esters. FABP2 is probably involved in triglyceride-rich lipoprotein synthesis. Binds saturated long-chain fatty acids with a high affinity, but binds with a lower affinity to unsaturated long-chain fatty acids. FABP2 may also help maintain energy homeostasis by functioning as a lipid sensor. The polypeptide is Fatty acid-binding protein, intestinal (FABP2) (Bos taurus (Bovine)).